Reading from the N-terminus, the 157-residue chain is ATP synthase subunit b (157 aa).

A helical membrane pass occupies residues 7–29 (LISQAIAFSLFILFTARFVWPYL).

It belongs to the ATPase B chain family. F-type ATPases have 2 components, F(1) - the catalytic core - and F(0) - the membrane proton channel. F(1) has five subunits: alpha(3), beta(3), gamma(1), delta(1), epsilon(1). F(0) has three main subunits: a(1), b(2) and c(10-14). The alpha and beta chains form an alternating ring which encloses part of the gamma chain. F(1) is attached to F(0) by a central stalk formed by the gamma and epsilon chains, while a peripheral stalk is formed by the delta and b chains.

The protein resides in the cell inner membrane. In terms of biological role, f(1)F(0) ATP synthase produces ATP from ADP in the presence of a proton or sodium gradient. F-type ATPases consist of two structural domains, F(1) containing the extramembraneous catalytic core and F(0) containing the membrane proton channel, linked together by a central stalk and a peripheral stalk. During catalysis, ATP synthesis in the catalytic domain of F(1) is coupled via a rotary mechanism of the central stalk subunits to proton translocation. Its function is as follows. Component of the F(0) channel, it forms part of the peripheral stalk, linking F(1) to F(0). The protein is ATP synthase subunit b of Nitrosomonas europaea (strain ATCC 19718 / CIP 103999 / KCTC 2705 / NBRC 14298).